The following is a 310-amino-acid chain: Zinc finger protein 346 (310 aa).

Met-1 is modified (N-acetylmethionine). Low complexity predominate over residues 1–12 (MEYPAPAAVQAA). Residues 1 to 33 (MEYPAPAAVQAADGGGAGPYNSSELLEGQEPDG) form a disordered region. The Matrin-type 1 zinc finger occupies 70 to 104 (FTNTQCKVCCALLISESQKLAHYQSKKHANKVKRY). Zn(2+) contacts are provided by Cys-75, Cys-78, His-91, and His-97. A Glycyl lysine isopeptide (Lys-Gly) (interchain with G-Cter in SUMO2) cross-link involves residue Lys-114. A Matrin-type 2 zinc finger spans residues 131–165 (DKNQCCPICNMTFSSPVVAQSHYLGKTHAKNLKLK). Residues Cys-136, Cys-139, His-152, and His-158 each contribute to the Zn(2+) site. Lys-170 is covalently cross-linked (Glycyl lysine isopeptide (Lys-Gly) (interchain with G-Cter in SUMO2)). 2 consecutive Matrin-type zinc fingers follow at residues 198–232 (DPDKFCSLCHATFNDPVMAQQHYVGKKHRKQETKL) and 252–286 (GKGYPCKTCKIVLNSIEQYQAHVSGFKHKNQSPKT). The tract at residues 278-310 (KHKNQSPKTVASSLGQIPMQRQPIQKDSTTLED) is disordered. Polar residues-rich tracts occupy residues 283–292 (SPKTVASSLG) and 299–310 (QPIQKDSTTLED).

Forms a heteromeric complex with XPO5 and ILF3. Found in a nuclear export complex with XPO5, RAN, ILF3, ZNF346 and double-stranded RNA. Interacts with XPO5. Interacts with ILF3 in an RNA-independent manner.

The protein localises to the nucleus. It localises to the nucleolus. The protein resides in the cytoplasm. Its function is as follows. Binds with low affinity to dsDNA and ssRNA, and with high affinity to dsRNA, with no detectable sequence specificity. The chain is Zinc finger protein 346 (ZNF346) from Pongo abelii (Sumatran orangutan).